The chain runs to 462 residues: MEQAIKQLRNQQKQLDQQIEQQKQTLNSLISRREEVTKGIQTLELLSGTTLVPDQQIHEALQPAVSESTKGNQEIKTWKQIFDEEHELTREEKIDATVGQKKKAYVIFDGPWKGIYQDWHIVKSKVNAQPYRYKGYNSLEEAKLAHKQAYAEVTKADEVKVEKTMKSFAKNNVAEKIHGLHKSGPKELTEAEFYRNWKMITEWTEESANLGFYPDCSKQVKAVFFIGADPHLLSSFYQSGLISYIYLQEDEGQKGAISKATSQLPKELRRTCQQYQLSFAKTREFYLAIQSTYPVFDEEKMLVPAKHLVKLGISASSYPENKIVKTNFNFSLFINSVDKLYNYIRQYGTTIKGFKVLMKTQLCLAVCLIRDQAEESSKIMVMEFELDISTLTGIFSNLPKELKKATCEKMHRYKSHLCESCEINFPELSETMNVSNDEKRSTKSVSSDEINLSAENDGYQHS.

A disordered region spans residues asparagine 433–serine 462. A compositionally biased stretch (polar residues) spans lysine 443 to serine 462.

The protein belongs to the caulimoviridae viroplasmin family.

The protein localises to the host cytoplasm. Its function is as follows. Enhances the translation of downstream ORFs on polycistronic mRNAs derived from soybean chlorotic mottle virus. The protein is Transactivator/viroplasmin protein of Soybean chlorotic mottle virus.